A 494-amino-acid chain; its full sequence is 4-trimethylaminobutyraldehyde dehydrogenase (494 aa).

Ser-2 carries the post-translational modification N-acetylserine; in 4-trimethylaminobutyraldehyde dehydrogenase, N-terminally processed. Residue Lys-30 is modified to N6-acetyllysine; alternate. Lys-30 is modified (N6-succinyllysine; alternate). An N6-succinyllysine modification is found at Lys-59. NAD(+) is bound by residues Lys-180 and 232–236; that span reads GSVPT. Residue Glu-254 is the Proton acceptor of the active site. The active-site Nucleophile is the Cys-288. Lys-298 carries the post-translational modification N6-acetyllysine. Lys-303 is modified (N6-acetyllysine; alternate). At Lys-303 the chain carries N6-succinyllysine; alternate. Lys-344 carries the N6-acetyllysine modification. Glu-391 provides a ligand contact to NAD(+).

This sequence belongs to the aldehyde dehydrogenase family. As to quaternary structure, homotetramer. In terms of tissue distribution, detected in brain (at protein level). High expression in adult liver, skeletal muscle, and kidney. Low levels in heart, pancreas, lung and brain. Expressed in all regions of the brain. Expression levels are variable in the different brain areas, with the highest levels in the spinal cord and the lowest in the occipital pole.

It is found in the cytoplasm. The protein resides in the cytosol. It carries out the reaction 4-(trimethylamino)butanal + NAD(+) + H2O = 4-(trimethylamino)butanoate + NADH + 2 H(+). The catalysed reaction is an aldehyde + NAD(+) + H2O = a carboxylate + NADH + 2 H(+). The enzyme catalyses 4-aminobutanal + NAD(+) + H2O = 4-aminobutanoate + NADH + 2 H(+). It catalyses the reaction formaldehyde + NAD(+) + H2O = formate + NADH + 2 H(+). It carries out the reaction acetaldehyde + NAD(+) + H2O = acetate + NADH + 2 H(+). The catalysed reaction is imidazole-4-acetaldehyde + NAD(+) + H2O = imidazole-4-acetate + NADH + 2 H(+). The enzyme catalyses acrolein + NAD(+) + H2O = acrylate + NADH + 2 H(+). It catalyses the reaction (5-hydroxyindol-3-yl)acetaldehyde + NAD(+) + H2O = (5-hydroxyindol-3-yl)acetate + NADH + 2 H(+). It carries out the reaction 3,4-dihydroxyphenylacetaldehyde + NAD(+) + H2O = 3,4-dihydroxyphenylacetate + NADH + 2 H(+). The catalysed reaction is spermine monoaldehyde + NAD(+) + H2O = N-(2-carboxyethyl)spermidine + NADH + 2 H(+). The enzyme catalyses propanal + NAD(+) + H2O = propanoate + NADH + 2 H(+). It catalyses the reaction butanal + NAD(+) + H2O = butanoate + NADH + 2 H(+). It carries out the reaction pentanal + NAD(+) + H2O = pentanoate + NADH + 2 H(+). The catalysed reaction is hexanal + NAD(+) + H2O = hexanoate + NADH + 2 H(+). It functions in the pathway amine and polyamine biosynthesis; carnitine biosynthesis. In terms of biological role, converts gamma-trimethylaminobutyraldehyde into gamma-butyrobetaine with high efficiency (in vitro). Can catalyze the irreversible oxidation of a broad range of aldehydes to the corresponding acids in an NAD-dependent reaction, but with low efficiency. Catalyzes the oxidation of aldehydes arising from biogenic amines and polyamines. The chain is 4-trimethylaminobutyraldehyde dehydrogenase (ALDH9A1) from Homo sapiens (Human).